We begin with the raw amino-acid sequence, 256 residues long: Beta-fibrinogenase-like (256 aa).

A signal peptide spans methionine 1 to alanine 18. Positions glutamine 19–leucine 24 are excised as a propeptide. A Peptidase S1 domain is found at valine 25–alanine 247. Disulfide bonds link cysteine 31–cysteine 161, cysteine 49–cysteine 65, cysteine 96–cysteine 254, cysteine 140–cysteine 208, cysteine 172–cysteine 187, and cysteine 198–cysteine 223. An N-linked (GlcNAc...) asparagine glycan is attached at asparagine 44. Catalysis depends on histidine 64, which acts as the Charge relay system. Asparagine 78 and asparagine 101 each carry an N-linked (GlcNAc...) asparagine glycan. Residue aspartate 108 is the Charge relay system of the active site. The N-linked (GlcNAc...) asparagine glycan is linked to asparagine 152. Residue serine 202 is the Charge relay system of the active site.

This sequence belongs to the peptidase S1 family. Snake venom subfamily. In terms of assembly, monomer. In terms of tissue distribution, expressed by the venom gland.

It localises to the secreted. Snake venom serine protease that has fibrinogenolytic activities by hydrolyzing the beta chain of fibrinogen (FGB). Typical arginine esterase which hydrolyzes esters and amides of arginine. The sequence is that of Beta-fibrinogenase-like from Daboia siamensis (Eastern Russel's viper).